Here is a 298-residue protein sequence, read N- to C-terminus: tRNA dimethylallyltransferase 2 (298 aa).

19–26 (GATATGKT) contacts ATP. Residue 21 to 26 (TATGKT) coordinates substrate. Positions 44–47 (DSRQ) are interaction with substrate tRNA.

This sequence belongs to the IPP transferase family. Monomer. Mg(2+) serves as cofactor.

The catalysed reaction is adenosine(37) in tRNA + dimethylallyl diphosphate = N(6)-dimethylallyladenosine(37) in tRNA + diphosphate. Its function is as follows. Catalyzes the transfer of a dimethylallyl group onto the adenine at position 37 in tRNAs that read codons beginning with uridine, leading to the formation of N6-(dimethylallyl)adenosine (i(6)A). This chain is tRNA dimethylallyltransferase 2, found in Treponema denticola (strain ATCC 35405 / DSM 14222 / CIP 103919 / JCM 8153 / KCTC 15104).